The sequence spans 460 residues: Acetyl-CoA decarbonylase/synthase complex subunit beta (460 aa).

The [Ni-Fe-S] cluster site is built by Cys-188, Cys-191, Cys-277, and Cys-279. Residues 402–416 show a composition bias toward acidic residues; that stretch reads EETEPEEEEVEEAYP. The interval 402–422 is disordered; it reads EETEPEEEEVEEAYPEETPIP.

Belongs to the CdhC family. Monomer. The ACDS complex is made up of alpha, epsilon, beta, gamma and delta chains with a probable stoichiometry of (alpha(2)epsilon(2))(4)-beta(8)-(gamma(1)delta(1))(8). It depends on [Ni-Fe-S] cluster as a cofactor.

The enzyme catalyses Co(I)-[corrinoid Fe-S protein] + acetyl-CoA + H(+) = methyl-Co(III)-[corrinoid Fe-S protein] + CO + CoA. In terms of biological role, part of a complex that catalyzes the reversible cleavage of acetyl-CoA, allowing autotrophic growth from CO(2). The alpha-epsilon complex generates CO from CO(2), while the beta subunit (this protein) combines the CO with CoA and a methyl group to form acetyl-CoA. The methyl group, which is incorporated into acetyl-CoA, is transferred to the beta subunit by a corrinoid iron-sulfur protein (the gamma-delta complex). This is Acetyl-CoA decarbonylase/synthase complex subunit beta from Methanothermobacter thermautotrophicus (strain ATCC 29096 / DSM 1053 / JCM 10044 / NBRC 100330 / Delta H) (Methanobacterium thermoautotrophicum).